The primary structure comprises 323 residues: tRNA U34 carboxymethyltransferase (323 aa).

Residues Lys91, Trp105, Lys110, Gly130, 152 to 154, 181 to 182, Met196, Tyr200, and Arg315 contribute to the carboxy-S-adenosyl-L-methionine site; these read DPT and IE.

The protein belongs to the class I-like SAM-binding methyltransferase superfamily. CmoB family. In terms of assembly, homotetramer.

It catalyses the reaction carboxy-S-adenosyl-L-methionine + 5-hydroxyuridine(34) in tRNA = 5-carboxymethoxyuridine(34) in tRNA + S-adenosyl-L-homocysteine + H(+). Catalyzes carboxymethyl transfer from carboxy-S-adenosyl-L-methionine (Cx-SAM) to 5-hydroxyuridine (ho5U) to form 5-carboxymethoxyuridine (cmo5U) at position 34 in tRNAs. The polypeptide is tRNA U34 carboxymethyltransferase (Salmonella paratyphi A (strain ATCC 9150 / SARB42)).